The primary structure comprises 232 residues: Ribose-5-phosphate isomerase A (232 aa).

Substrate contacts are provided by residues 28-31 (TGST), 83-86 (DGAD), and 96-99 (KGGG). Glutamate 105 (proton acceptor) is an active-site residue. Lysine 123 is a binding site for substrate.

The protein belongs to the ribose 5-phosphate isomerase family. In terms of assembly, homodimer.

It carries out the reaction aldehydo-D-ribose 5-phosphate = D-ribulose 5-phosphate. The protein operates within carbohydrate degradation; pentose phosphate pathway; D-ribose 5-phosphate from D-ribulose 5-phosphate (non-oxidative stage): step 1/1. Its function is as follows. Catalyzes the reversible conversion of ribose-5-phosphate to ribulose 5-phosphate. The polypeptide is Ribose-5-phosphate isomerase A (Rhizobium leguminosarum bv. trifolii (strain WSM2304)).